A 438-amino-acid chain; its full sequence is tRNA modification GTPase MnmE (438 aa).

Residues Arg20, Glu78, and Lys117 each contribute to the (6S)-5-formyl-5,6,7,8-tetrahydrofolate site. The TrmE-type G domain maps to 214 to 359 (GIRVLIIGKP…LIDEIKKLFY (146 aa)). Asn224 contacts K(+). Residues 224-229 (NVGKST), 243-249 (TDIPGTT), and 268-271 (DTAG) each bind GTP. Ser228 provides a ligand contact to Mg(2+). K(+)-binding residues include Thr243, Ile245, and Thr248. Thr249 is a binding site for Mg(2+). A (6S)-5-formyl-5,6,7,8-tetrahydrofolate-binding site is contributed by Lys438.

It belongs to the TRAFAC class TrmE-Era-EngA-EngB-Septin-like GTPase superfamily. TrmE GTPase family. In terms of assembly, homodimer. Heterotetramer of two MnmE and two MnmG subunits. The cofactor is K(+).

The protein resides in the cytoplasm. Functionally, exhibits a very high intrinsic GTPase hydrolysis rate. Involved in the addition of a carboxymethylaminomethyl (cmnm) group at the wobble position (U34) of certain tRNAs, forming tRNA-cmnm(5)s(2)U34. This is tRNA modification GTPase MnmE from Ureaplasma parvum serovar 3 (strain ATCC 27815 / 27 / NCTC 11736).